The primary structure comprises 59 residues: MNTQRAQEIVESPDMVDVTYNGRPIYIQRVDEQNETARIFPLGQPENEQEVPLANLKEH.

It belongs to the SspH family.

It is found in the spore core. This chain is Small, acid-soluble spore protein H, found in Bacillus licheniformis (strain ATCC 14580 / DSM 13 / JCM 2505 / CCUG 7422 / NBRC 12200 / NCIMB 9375 / NCTC 10341 / NRRL NRS-1264 / Gibson 46).